We begin with the raw amino-acid sequence, 97 residues long: UPF0235 protein DET1292 (97 aa).

It belongs to the UPF0235 family.

The protein is UPF0235 protein DET1292 of Dehalococcoides mccartyi (strain ATCC BAA-2266 / KCTC 15142 / 195) (Dehalococcoides ethenogenes (strain 195)).